A 523-amino-acid chain; its full sequence is Sporulation protein 23 (523 aa).

As to quaternary structure, interacts with SPO1 in meiosis.

In terms of biological role, regulates expression of PIS1. The chain is Sporulation protein 23 (SPO23) from Saccharomyces cerevisiae (strain ATCC 204508 / S288c) (Baker's yeast).